The chain runs to 137 residues: Nucleoside diphosphate kinase (137 aa).

Residues K9, F57, R85, T91, R102, and N112 each coordinate ATP. The active-site Pros-phosphohistidine intermediate is H115.

The protein belongs to the NDK family. In terms of assembly, homotetramer. Requires Mg(2+) as cofactor.

The protein localises to the cytoplasm. The enzyme catalyses a 2'-deoxyribonucleoside 5'-diphosphate + ATP = a 2'-deoxyribonucleoside 5'-triphosphate + ADP. The catalysed reaction is a ribonucleoside 5'-diphosphate + ATP = a ribonucleoside 5'-triphosphate + ADP. Its function is as follows. Major role in the synthesis of nucleoside triphosphates other than ATP. The ATP gamma phosphate is transferred to the NDP beta phosphate via a ping-pong mechanism, using a phosphorylated active-site intermediate. This chain is Nucleoside diphosphate kinase, found in Campylobacter jejuni subsp. jejuni serotype O:6 (strain 81116 / NCTC 11828).